A 623-amino-acid chain; its full sequence is F-box protein FBX14 (623 aa).

A disordered region spans residues 18 to 48 (LNLNPPCSSSSSSSSAATFTNKSRNFKSSPP). Positions 33 to 45 (AATFTNKSRNFKS) are enriched in polar residues. The F-box domain occupies 54–97 (VLENVLENVLQFLTSRCDRNAVSLVCRSWYRVEAQTRLEVFIGN). Lys-119 contacts 1D-myo-inositol hexakisphosphate. The tract at residues 126-127 (DF) is interaction with auxin-responsive proteins. 1D-myo-inositol hexakisphosphate contacts are provided by residues 158-159 (KR) and Arg-391. An interaction with auxin-responsive proteins region spans residues 394–399 (PFDPRE). 447 to 449 (VFR) serves as a coordination point for 1D-myo-inositol hexakisphosphate. The interval 451-455 (CIMGR) is interaction with auxin-responsive proteins. Arg-482 is a 1D-myo-inositol hexakisphosphate binding site. The interval 510 to 511 (AF) is interaction with auxin-responsive proteins. 1D-myo-inositol hexakisphosphate is bound by residues 530-531 (QK) and Arg-555.

Part of a SCF (SKP1-cullin-F-box) protein ligase complex. May interact with auxin and auxin-responsive proteins.

It localises to the nucleus. Its pathway is protein modification; protein ubiquitination. This chain is F-box protein FBX14 (FBX14), found in Arabidopsis thaliana (Mouse-ear cress).